The chain runs to 305 residues: tRNA dimethylallyltransferase (305 aa).

Position 14 to 21 (14 to 21) interacts with ATP; it reads GPTASGKT. 16-21 is a binding site for substrate; the sequence is TASGKT. 3 interaction with substrate tRNA regions span residues 39–42, 163–167, and 243–248; these read DSAL, QRIIR, and RCVGYR.

It belongs to the IPP transferase family. As to quaternary structure, monomer. The cofactor is Mg(2+).

The catalysed reaction is adenosine(37) in tRNA + dimethylallyl diphosphate = N(6)-dimethylallyladenosine(37) in tRNA + diphosphate. Its function is as follows. Catalyzes the transfer of a dimethylallyl group onto the adenine at position 37 in tRNAs that read codons beginning with uridine, leading to the formation of N6-(dimethylallyl)adenosine (i(6)A). This is tRNA dimethylallyltransferase from Vesicomyosocius okutanii subsp. Calyptogena okutanii (strain HA).